We begin with the raw amino-acid sequence, 186 residues long: Adenine phosphoribosyltransferase (186 aa).

The protein belongs to the purine/pyrimidine phosphoribosyltransferase family. As to quaternary structure, homodimer.

It is found in the cytoplasm. The catalysed reaction is AMP + diphosphate = 5-phospho-alpha-D-ribose 1-diphosphate + adenine. Its pathway is purine metabolism; AMP biosynthesis via salvage pathway; AMP from adenine: step 1/1. Its function is as follows. Catalyzes a salvage reaction resulting in the formation of AMP, that is energically less costly than de novo synthesis. The polypeptide is Adenine phosphoribosyltransferase (Xanthomonas campestris pv. campestris (strain 8004)).